A 1361-amino-acid polypeptide reads, in one-letter code: Xanthine dehydrogenase 1 (1361 aa).

The 2Fe-2S ferredoxin-type domain maps to 15 to 101; the sequence is TEALLYVNGV…GMHVISIEGL (87 aa). Positions 53, 58, 61, 83, 123, 126, 159, and 161 each coordinate [2Fe-2S] cluster. The region spanning 257–442 is the FAD-binding PCMH-type domain; that stretch reads RGNGGITWYR…LSVFLPWTRP (186 aa). FAD contacts are provided by residues 285–292, phenylalanine 365, 375–379, aspartate 388, leucine 432, and lysine 450; these read LLVGNTEV and CIGGN. Mo-molybdopterin-binding residues include glutamine 796 and phenylalanine 827. Positions 831 and 909 each coordinate substrate. Arginine 941 is a Mo-molybdopterin binding site. Positions 943 and 1039 each coordinate substrate. Alanine 1108 contributes to the Mo-molybdopterin binding site. Glutamate 1297 functions as the Proton acceptor in the catalytic mechanism.

Belongs to the xanthine dehydrogenase family. Homodimer. [2Fe-2S] cluster is required as a cofactor. FAD serves as cofactor. Requires Mo-molybdopterin as cofactor. Expressed in roots, leaves, stems, flowers and siliques.

The catalysed reaction is xanthine + NAD(+) + H2O = urate + NADH + H(+). The enzyme catalyses hypoxanthine + NAD(+) + H2O = xanthine + NADH + H(+). Key enzyme involved in purine catabolism. Catalyzes the oxidation of hypoxanthine to xanthine and the oxidation of xanthine to urate. Regulates the level of ureides and plays an important role during plant growth and development, senescence and response to stresses. Possesses NADH oxidase activity and may contribute to the generation of superoxide anions in planta. The sequence is that of Xanthine dehydrogenase 1 (XDH1) from Arabidopsis thaliana (Mouse-ear cress).